The primary structure comprises 176 residues: tRNA (adenine(37)-N6)-methyltransferase (176 aa).

In terms of domain architecture, TsaA-like spans 1–94; sequence SFSHIWVQFV…YLPFVEAQPD (94 aa). S-adenosyl-L-methionine is bound by residues His-12, 12 to 13, Arg-40, Leu-50, and 74 to 77; these read HG and LDGT.

The protein belongs to the tRNA methyltransferase O family.

It carries out the reaction N(6)-L-threonylcarbamoyladenosine(37) in tRNA + S-adenosyl-L-methionine = N(6)-methyl,N(6)-L-threonylcarbamoyladenosine(37) in tRNA + S-adenosyl-L-homocysteine + H(+). Its function is as follows. S-adenosyl-L-methionine-dependent methyltransferase responsible for the addition of the methyl group in the formation of N6-methyl-N6-threonylcarbamoyladenosine at position 37 (m(6)t(6)A37) of the tRNA anticodon loop of tRNA(Thr)(GGU). The methyl group of m(6)t(6)A37 appears to slightly improve the efficiency of the tRNA decoding ability. Binds to tRNA. In Eikenella corrodens, this protein is tRNA (adenine(37)-N6)-methyltransferase.